Reading from the N-terminus, the 449-residue chain is MELETHLSKYFTLAFTHKSMSLEMREKLAINSSATLKEFLQTIKTHCPNIKECMVLSTCNRFEIYASLKHNTHANEQKNALLKILAQNKKMSMSDLEKCVLMNTDESAVHHVFSVCSSLDSLVVGETQITGQMKNAYRFAFEEKFCSKDLTRLLHFAFKCAAKVRNLTGISKQGVSISSVAVKEALNIFEKERIKDKKALVIGLGEMAQLVIKHLLNKQFEVLILGRNAAKFEDFIKELEEPKKVSFQNIENLNAYINAYALLFCATSSPHFIVQNRMLKETSFRRFWFDLAVPRNIEKPVFNNIFLYSVDDLEPMVRENVGNRQESRTRAYEIVGLATMEFYQWIQSLEVEPLIKDLRELARISAQKELQKALKKRYVPKEYEGNIEKILHNAFNTFLHHPTIALKKNAQKEESDVLVGAIKNLFNLDKSTTCHAQNLNLYKCEYYEE.

Residues 58–61, Ser-121, 126–128, and Gln-132 contribute to the substrate site; these read TCNR and ETQ. Cys-59 (nucleophile) is an active-site residue. 203-208 provides a ligand contact to NADP(+); sequence GLGEMA.

This sequence belongs to the glutamyl-tRNA reductase family. Homodimer.

The catalysed reaction is (S)-4-amino-5-oxopentanoate + tRNA(Glu) + NADP(+) = L-glutamyl-tRNA(Glu) + NADPH + H(+). Its pathway is porphyrin-containing compound metabolism; protoporphyrin-IX biosynthesis; 5-aminolevulinate from L-glutamyl-tRNA(Glu): step 1/2. Its function is as follows. Catalyzes the NADPH-dependent reduction of glutamyl-tRNA(Glu) to glutamate 1-semialdehyde (GSA). This Helicobacter pylori (strain G27) protein is Glutamyl-tRNA reductase.